A 1502-amino-acid polypeptide reads, in one-letter code: Leucine-rich repeat-containing protein 9 (1502 aa).

29 LRR repeats span residues 53–79, 97–119, 120–141, 142–164, 166–188, 224–247, 296–320, 699–721, 722–744, 746–764, 765–790, 792–814, 822–849, 894–916, 917–938, 939–960, 961–983, 985–1009, 1011–1030, 1031–1053, 1100–1123, 1124–1146, 1147–1170, 1209–1232, 1234–1255, 1256–1278, 1280–1301, 1302–1325, and 1327–1351; these read FPNL…HFLK, CADL…LENL, LKLE…LDMM, QNLK…LDPN, QLER…NLAR, LQRL…TVVK, EHEL…KFHE, YSQI…ISRL, NGLR…SYLT, LEYL…GFKG, LGKL…ILRK, AIQL…VLKD, LTHL…RITQ, YTKI…LEKL, VNLR…LEHC, VNLE…LSKL, TKLR…VIES, SHLH…GYKL, ELYL…SLKG, LNNL…NYRL, FTEL…PADH, FRNV…LIFL, PNIK…KSQS, MQSL…QLGR, RNLK…LENL, QFLR…SFAK, NSLV…LPPL, LKLR…KLEV, and PALV…LLVV. Residues 317–342 form a disordered region; that stretch reads KFHENNCDTEESNSQQSSERRKNNSD. Residues 1479–1496 show a composition bias toward polar residues; it reads TQQSGQARSQQKHPFNQE. The segment at 1479-1502 is disordered; the sequence is TQQSGQARSQQKHPFNQENEGRCV.

The protein is Leucine-rich repeat-containing protein 9 (lrrc9) of Xenopus tropicalis (Western clawed frog).